The sequence spans 123 residues: Steroid Delta-isomerase (123 aa).

Tyr12 (proton donor) is an active-site residue. Asp36 (proton acceptor) is an active-site residue. Asp96 is a binding site for substrate.

In terms of assembly, homodimer.

The enzyme catalyses a 3-oxo-Delta(5)-steroid = a 3-oxo-Delta(4)-steroid. The sequence is that of Steroid Delta-isomerase (ksdI) from Nocardioides simplex (Arthrobacter simplex).